The chain runs to 519 residues: Sugar transport protein MST5 (519 aa).

Over 1-18 the chain is Cytoplasmic; the sequence is MAGGAMVQTVGGKTYPGK. Residues 19 to 39 form a helical membrane-spanning segment; that stretch reads MTAFVFFTCLVASSGGLIFGY. The Extracellular portion of the chain corresponds to 40–80; sequence DIGISGGVTSMDSFLSEFFPSVYAQAKASKDTNQYCKFDSQ. Residues 81 to 101 form a helical membrane-spanning segment; it reads LLTLFTSSLYLAALATSFVAA. At 102–110 the chain is on the cytoplasmic side; it reads WVTRVFGRK. A helical membrane pass occupies residues 111–127; it reads WSMFCGGVTFLAGSALN. A topological domain (extracellular) is located at residue Gly-128. Residues 129-149 traverse the membrane as a helical segment; that stretch reads AATDVMMLILGRILLGIGVGF. Residues 150–167 are Cytoplasmic-facing; the sequence is ANQSVPLYLSEMAPANLR. Residues 168–188 form a helical membrane-spanning segment; sequence GMLNIGFQLMTTIGILSANLI. At 189–202 the chain is on the extracellular side; the sequence is NYATSSIEGGWGWR. The helical transmembrane segment at 203–223 threads the bilayer; it reads IGLGLAGVPALIITLGALVLP. At 224 to 295 the chain is on the cytoplasmic side; sequence DTPNSLIARG…IAILIPCFQQ (72 aa). Residues 296–316 traverse the membrane as a helical segment; it reads LTGINVIMFYAPVLFLTIGFA. At 317 to 321 the chain is on the extracellular side; it reads GDASL. A helical transmembrane segment spans residues 322–342; that stretch reads MSAVITGLVNMFATVVSIISV. Topologically, residues 343–357 are cytoplasmic; sequence DRLGRRVLFLQGGTQ. A helical membrane pass occupies residues 358-378; the sequence is MFISQVVVGTLIALQFGVAGV. Residues 379 to 386 are Extracellular-facing; it reads GEMSRSYA. A helical membrane pass occupies residues 387 to 407; it reads ILLVLFICMYVAGFAWSWGPL. The Cytoplasmic portion of the chain corresponds to 408-426; sequence GWLVPSEVFALEIRSAGQS. The helical transmembrane segment at 427 to 447 threads the bilayer; sequence IAVCVNMMLTFVIGQAFLTML. Topologically, residues 448–451 are extracellular; the sequence is CHLK. The helical transmembrane segment at 452-472 threads the bilayer; the sequence is FGLFYFFAGWMLVMTTFVALF. The Cytoplasmic portion of the chain corresponds to 473-519; the sequence is LPETKGVPIEEMNHVWSRHWFWGSYVTAHDVAGAGAGGGGNRRSHNV.

The protein belongs to the major facilitator superfamily. Sugar transporter (TC 2.A.1.1) family. Expressed in panicles before heading. Expressed in flowers before pollination.

The protein localises to the membrane. Functionally, mediates active uptake of hexoses by sugar:proton symport. Can transport glucose, xylose and 3-O-methylglucose. May play a role at the early stage of seed development. This chain is Sugar transport protein MST5, found in Oryza sativa subsp. japonica (Rice).